A 99-amino-acid polypeptide reads, in one-letter code: C-C motif chemokine 8 (99 aa).

An N-terminal signal peptide occupies residues 1–23; it reads MKVSAGILCLLLVAATFGTQVLA. Residue Gln24 is modified to Pyrrolidone carboxylic acid. 2 cysteine pairs are disulfide-bonded: Cys34/Cys59 and Cys35/Cys75.

Belongs to the intercrine beta (chemokine CC) family. In terms of assembly, monomer or homodimer; in equilibrium.

It localises to the secreted. Functionally, chemotactic factor that attracts monocytes. This protein can bind heparin. This is C-C motif chemokine 8 (CCL8) from Bos taurus (Bovine).